Consider the following 332-residue polypeptide: T-cell surface glycoprotein CD1b2 (332 aa).

An N-terminal signal peptide occupies residues 1-17 (MLLLVLALLAVLFPAGD). Residues 18–301 (TQDAFPEPIS…ILYWGNSSIG (284 aa)) are Extracellular-facing. 3 N-linked (GlcNAc...) asparagine glycosylation sites follow: asparagine 38, asparagine 75, and asparagine 146. Intrachain disulfides connect cysteine 120/cysteine 184, cysteine 149/cysteine 163, and cysteine 224/cysteine 279. One can recognise an Ig-like domain in the interval 185–295 (PRYLMSVLEA…LGGQDIILYW (111 aa)). N-linked (GlcNAc...) asparagine glycosylation is present at asparagine 297. Residues 302-322 (WIILAVFVSCLIVLLFYVLWF) form a helical membrane-spanning segment. Topologically, residues 323–332 (YKHWSYQDIL) are cytoplasmic. The short motif at 328–331 (YQDI) is the Internalization signal element.

In terms of assembly, heterodimer with B2M (beta-2-microglobulin). Interacts with saposin C.

It is found in the cell membrane. The protein localises to the endosome membrane. It localises to the lysosome membrane. Its function is as follows. Antigen-presenting protein that binds self and non-self lipid and glycolipid antigens and presents them to T-cell receptors on natural killer T-cells. This is T-cell surface glycoprotein CD1b2 (CD1B2) from Cavia porcellus (Guinea pig).